Reading from the N-terminus, the 372-residue chain is N-methyl-L-tryptophan oxidase (372 aa).

An FAD-binding site is contributed by 4 to 34 (DLIIIGSGSVGAAAGYYATRAGLNVLMTDAH). Position 308 is an S-8alpha-FAD cysteine (Cys-308).

The protein belongs to the MSOX/MTOX family. MTOX subfamily. In terms of assembly, monomer. The cofactor is FAD.

The catalysed reaction is N(alpha)-methyl-L-tryptophan + O2 + H2O = L-tryptophan + formaldehyde + H2O2. Catalyzes the oxidative demethylation of N-methyl-L-tryptophan. The chain is N-methyl-L-tryptophan oxidase from Shigella sonnei (strain Ss046).